Reading from the N-terminus, the 164-residue chain is Hydroxylaminobenzene mutase HabB (164 aa).

A run of 4 helical transmembrane segments spans residues 16–36 (LLQLGIALFLLGLLTGFLLPM), 50–70 (GVLNGMFLLALGLMWPQLSLG), 78–98 (FGFAVYGTYANWLATLLAGFW), and 121–141 (LIAFALISLSLSMLVVCALAL).

It is found in the cell membrane. The enzyme catalyses N-phenylhydroxylamine = 2-aminophenol. With respect to regulation, addition of ZnSO(4) decreases the activity to 70%. Its function is as follows. Catalyzes the rearrangement of hydroxylaminobenzene to 2-aminophenol. This Ectopseudomonas oleovorans (Pseudomonas oleovorans) protein is Hydroxylaminobenzene mutase HabB (habB).